The sequence spans 60 residues: Prophage outer membrane lipoprotein RzoD (60 aa).

The first 19 residues, 1-19 (MRKLKMMLCVMMLPLVVVG), serve as a signal peptide directing secretion. Cysteine 20 is lipidated: N-palmitoyl cysteine. Cysteine 20 carries the S-diacylglycerol cysteine lipid modification.

The protein belongs to the lambdalikevirus o-spanin family. As to quaternary structure, homodimer; disulfide-linked. Interacts (via C-terminus) with RZ (via C-terminus). Part of the spanin complex which spans the entire periplasmic space. The spanin complex is composed of spanin, inner membrane subunit and spanin, outer membrane subunit.

The protein localises to the cell outer membrane. Its function is as follows. Component of the spanin complex that disrupts the outer membrane and causes cell lysis during virus exit. The spanin complex conducts the final step in cell lysis by disrupting the outer membrane after holin and endolysin action have permeabilized the inner membrane and degraded the host peptidoglycans. The chain is Prophage outer membrane lipoprotein RzoD (rzoD) from Escherichia coli (strain K12).